Here is a 264-residue protein sequence, read N- to C-terminus: Thymidylate synthase (264 aa).

A dUMP-binding site is contributed by Arg-21. His-51 serves as a coordination point for (6R)-5,10-methylene-5,6,7,8-tetrahydrofolate. 126-127 (RR) provides a ligand contact to dUMP. Cys-146 functions as the Nucleophile in the catalytic mechanism. Residues 166 to 169 (RSAD), Asn-177, and 207 to 209 (HLY) each bind dUMP. Asp-169 is a binding site for (6R)-5,10-methylene-5,6,7,8-tetrahydrofolate. Ala-263 is a binding site for (6R)-5,10-methylene-5,6,7,8-tetrahydrofolate.

Belongs to the thymidylate synthase family. Bacterial-type ThyA subfamily. Homodimer.

It is found in the cytoplasm. It carries out the reaction dUMP + (6R)-5,10-methylene-5,6,7,8-tetrahydrofolate = 7,8-dihydrofolate + dTMP. Its pathway is pyrimidine metabolism; dTTP biosynthesis. Its function is as follows. Catalyzes the reductive methylation of 2'-deoxyuridine-5'-monophosphate (dUMP) to 2'-deoxythymidine-5'-monophosphate (dTMP) while utilizing 5,10-methylenetetrahydrofolate (mTHF) as the methyl donor and reductant in the reaction, yielding dihydrofolate (DHF) as a by-product. This enzymatic reaction provides an intracellular de novo source of dTMP, an essential precursor for DNA biosynthesis. The protein is Thymidylate synthase of Legionella pneumophila (strain Lens).